A 274-amino-acid polypeptide reads, in one-letter code: MKKTVIALLAWFVSSASLAATPWQKITHPVPGAAQSIGSFANGCIIGADTLPVQSDNYQVMRTDQRRYFGHPDLVMFIQRLSHQAQQRRLGTVLIGDMGMPAGGRFNGGHASHQTGLDVDIFLQLPKTRWSQAQLLRPQALDLVSRDGKHVVPSRWSSDIASLIKLAAQDNDVTRIFVNPAIKQQLCLDAGSDRDWLRKVRPWFQHRAHMHVRLRCPADSLECEDQPLPPPGDGCGAELQSWFEPPKPGTTKPEKKTPPPLPPSCQALLDEHVL.

An N-terminal signal peptide occupies residues 1–19 (MKKTVIALLAWFVSSASLA). 3 cysteine pairs are disulfide-bonded: Cys44–Cys265, Cys187–Cys235, and Cys216–Cys223. The Zn(2+) site is built by His110, His113, Asp120, Asp147, His150, and His211. Positions 225-274 (DQPLPPPGDGCGAELQSWFEPPKPGTTKPEKKTPPPLPPSCQALLDEHVL) are disordered.

The protein belongs to the peptidase M74 family. Dimer. Zn(2+) is required as a cofactor.

It localises to the periplasm. Its function is as follows. Murein endopeptidase that cleaves the D-alanyl-meso-2,6-diamino-pimelyl amide bond that connects peptidoglycan strands. Likely plays a role in the removal of murein from the sacculus. This is Penicillin-insensitive murein endopeptidase from Salmonella paratyphi C (strain RKS4594).